Reading from the N-terminus, the 283-residue chain is Elongation factor Ts (283 aa).

Residues 80–83 (TDFV) form an involved in Mg(2+) ion dislocation from EF-Tu region.

Belongs to the EF-Ts family.

It localises to the cytoplasm. Functionally, associates with the EF-Tu.GDP complex and induces the exchange of GDP to GTP. It remains bound to the aminoacyl-tRNA.EF-Tu.GTP complex up to the GTP hydrolysis stage on the ribosome. The sequence is that of Elongation factor Ts from Actinobacillus pleuropneumoniae serotype 3 (strain JL03).